The primary structure comprises 552 residues: Antibiotic resistance protein MAB_2355c (552 aa).

2 consecutive ABC transporter domains span residues 4-270 (VQLD…RRWD) and 332-552 (AKRA…PQWV). ATP is bound by residues 37-44 (GPNGTGKT) and 364-371 (GGNGTGKS).

The protein belongs to the ABC transporter superfamily. ABCF family.

The catalysed reaction is ATP + H2O = ADP + phosphate + H(+). With respect to regulation, the ATPase activity can be inhibited by ribosome-targeting antibiotics. In terms of biological role, exhibits ATP hydrolysis activity and contributes to macrolide resistance by ribosome protection. Can also hydrolyze GTP, TTP and CTP but to a lesser extent than ATP. In vitro, rescues the transcription and translation activities affected by macrolides. Increased expression correlates with increased resistance to clarithromycin, one of the main drugs used to treat M.abscessus. This Mycobacteroides abscessus (strain ATCC 19977 / DSM 44196 / CCUG 20993 / CIP 104536 / JCM 13569 / NCTC 13031 / TMC 1543 / L948) (Mycobacterium abscessus) protein is Antibiotic resistance protein MAB_2355c.